A 104-amino-acid polypeptide reads, in one-letter code: NADH-quinone oxidoreductase subunit K (104 aa).

3 helical membrane-spanning segments follow: residues 4–24, 31–51, and 67–87; these read VPAS…LFGA, VIVL…LVAF, and LFTM…LIAL.

The protein belongs to the complex I subunit 4L family. As to quaternary structure, NDH-1 is composed of 14 different subunits. Subunits NuoA, H, J, K, L, M, N constitute the membrane sector of the complex.

The protein resides in the cell membrane. It carries out the reaction a quinone + NADH + 5 H(+)(in) = a quinol + NAD(+) + 4 H(+)(out). NDH-1 shuttles electrons from NADH, via FMN and iron-sulfur (Fe-S) centers, to quinones in the respiratory chain. The immediate electron acceptor for the enzyme in this species is believed to be a menaquinone. Couples the redox reaction to proton translocation (for every two electrons transferred, four hydrogen ions are translocated across the cytoplasmic membrane), and thus conserves the redox energy in a proton gradient. In Bacillus cytotoxicus (strain DSM 22905 / CIP 110041 / 391-98 / NVH 391-98), this protein is NADH-quinone oxidoreductase subunit K.